A 947-amino-acid chain; its full sequence is Testis-expressed protein 11 (947 aa).

Belongs to the SPO22 family. As to quaternary structure, interacts with SYCP2. Interacts with PBXIP1; may prevent interaction between PBXIP1 and ESR2. Interacts with SHOC1. Interacts with REDIC1. Testis-specific.

The protein resides in the chromosome. Its function is as follows. Regulator of crossing-over during meiosis. Involved in initiation and/or maintenance of chromosome synapsis and formation of crossovers. The chain is Testis-expressed protein 11 (Tex11) from Mus musculus (Mouse).